The sequence spans 122 residues: EPIDERMAL PATTERNING FACTOR-like protein 1 (122 aa).

An N-terminal signal peptide occupies residues 1–26 (MFAIYKSTLLLLPLILILLITPQVSS). 3 disulfide bridges follow: Cys-55/Cys-113, Cys-59/Cys-65, and Cys-62/Cys-115.

The protein belongs to the plant cysteine rich small secretory peptide family. Epidermal patterning factor subfamily.

The protein localises to the secreted. Its function is as follows. Controls stomatal patterning. This is EPIDERMAL PATTERNING FACTOR-like protein 1 from Arabidopsis thaliana (Mouse-ear cress).